The primary structure comprises 143 residues: Large ribosomal subunit protein uL15 (143 aa).

The interval 1–56 (MQLNSIKPAAGAKHAKRRVGRGIGSGLGKTAGRGHKGQKSRAGGYHKVGFEGGQMP) is disordered. Positions 21 to 31 (RGIGSGLGKTA) are enriched in gly residues.

It belongs to the universal ribosomal protein uL15 family. As to quaternary structure, part of the 50S ribosomal subunit.

Binds to the 23S rRNA. The polypeptide is Large ribosomal subunit protein uL15 (Verminephrobacter eiseniae (strain EF01-2)).